A 73-amino-acid chain; its full sequence is Crustacean hyperglycemic hormone (73 aa).

Cystine bridges form between Cys7/Cys43, Cys23/Cys39, and Cys26/Cys52. At Ser73 the chain carries Serine amide.

Produced by the medulla terminalis X-organ in the eyestalks and transported to the sinus gland where they are stored and released. Found also in the brain; in the neuroendocrine structures of the protocerebrum.

It is found in the secreted. Its function is as follows. Hormone found in the sinus gland of isopods and decapods which controls the blood sugar level. Has a secretagogue action over the amylase released from the midgut gland. May act as a stress hormone and may be involved in the control of molting and reproduction. The protein is Crustacean hyperglycemic hormone of Armadillidium vulgare (Pillbug).